Here is a 384-residue protein sequence, read N- to C-terminus: 8-amino-7-oxononanoate synthase (384 aa).

Arginine 21 serves as a coordination point for substrate. Residue 108–109 coordinates pyridoxal 5'-phosphate; that stretch reads GY. Histidine 133 provides a ligand contact to substrate. Serine 179, histidine 207, and threonine 233 together coordinate pyridoxal 5'-phosphate. The residue at position 236 (lysine 236) is an N6-(pyridoxal phosphate)lysine. A substrate-binding site is contributed by threonine 350.

This sequence belongs to the class-II pyridoxal-phosphate-dependent aminotransferase family. BioF subfamily. As to quaternary structure, homodimer. Requires pyridoxal 5'-phosphate as cofactor.

It catalyses the reaction 6-carboxyhexanoyl-[ACP] + L-alanine + H(+) = (8S)-8-amino-7-oxononanoate + holo-[ACP] + CO2. Its pathway is cofactor biosynthesis; biotin biosynthesis. Catalyzes the decarboxylative condensation of pimeloyl-[acyl-carrier protein] and L-alanine to produce 8-amino-7-oxononanoate (AON), [acyl-carrier protein], and carbon dioxide. The polypeptide is 8-amino-7-oxononanoate synthase (Buchnera aphidicola subsp. Baizongia pistaciae (strain Bp)).